A 660-amino-acid chain; its full sequence is WD repeat-containing protein 48 homolog (660 aa).

WD repeat units lie at residues 23 to 78 (MHRS…RDLH), 84 to 120 (HHTD…CMST), 123 to 162 (THRD…KLTA), 174 to 213 (GNKD…KLMK), 216 to 255 (GHTD…CISS), 258 to 297 (CHSE…TAQL), 300 to 341 (IEDA…ISVE), and 362 to 401 (PGAA…KVCD).

This sequence belongs to the WD repeat WDR48 family.

Functionally, regulator of deubiquitinating complexes. Activates deubiquitination by increasing the catalytic turnover without increasing the affinity of deubiquitinating enzymes for the substrate. The protein is WD repeat-containing protein 48 homolog of Brugia malayi (Filarial nematode worm).